The sequence spans 323 residues: GILT-like protein C02D5.2 (323 aa).

The chain crosses the membrane as a helical span at residues 13 to 32; sequence LICRPILTFSSLHILTAFLI. Asparagine 35 carries N-linked (GlcNAc...) asparagine glycosylation. 2 helical membrane-spanning segments follow: residues 37-59 and 87-104; these read SYIN…HRFL and YIYG…YRSL. An N-linked (GlcNAc...) asparagine glycan is attached at asparagine 289.

It belongs to the GILT family.

The protein localises to the membrane. This is GILT-like protein C02D5.2 from Caenorhabditis elegans.